A 480-amino-acid chain; its full sequence is MSLFEHGVKNLHTLVKDGEVKVSELVQESFDRIDRVDGKIGAFLSLNEDAFEQAKRMDEIAKHEANPLFGLPIGVKDNIVTKGMTTTCGSKFLENFVPAHDATVVERLHEAGAITIGKLNMDEFAMGSSNENSAYKPVRNPWNTKHVPGGSSGGSAAAVAAGEVLFSLGSDTGGSIRQPAAYCGVVGLKPTYGLVSRYGLVAFASSLDQIGPLTRTVEDNAYLLSAIAGHCDMDSTSANVNPTDYTQALTGDIKGLKIAVPKEYFGEGISEGVKENIRAAIKKLESLGATVDEVSLPNSKYALATYYLLASSEASSNLARFDGIRYGVRAEADALEDVFKYSRAQGFGDEVKRRIMLGTYALSSGYYDAYYKKAQQARTLIKHDFDQVLANYDVIIGPTAPTPAFELGAQNDDPVTMYANDILTIPINLAGVPAISVPAGLVDGLPVGLQIIGKHFDEATIYRAAHAFELATGGFALPKL.

Catalysis depends on charge relay system residues K76 and S151. S175 (acyl-ester intermediate) is an active-site residue.

The protein belongs to the amidase family. GatA subfamily. In terms of assembly, heterotrimer of A, B and C subunits.

It catalyses the reaction L-glutamyl-tRNA(Gln) + L-glutamine + ATP + H2O = L-glutaminyl-tRNA(Gln) + L-glutamate + ADP + phosphate + H(+). Allows the formation of correctly charged Gln-tRNA(Gln) through the transamidation of misacylated Glu-tRNA(Gln) in organisms which lack glutaminyl-tRNA synthetase. The reaction takes place in the presence of glutamine and ATP through an activated gamma-phospho-Glu-tRNA(Gln). This Exiguobacterium sibiricum (strain DSM 17290 / CCUG 55495 / CIP 109462 / JCM 13490 / 255-15) protein is Glutamyl-tRNA(Gln) amidotransferase subunit A.